Here is a 149-residue protein sequence, read N- to C-terminus: MRRVLLATLMAALPAAAMAADAEHVVEARKGYFSLVALEFGPLAAMAKGEMPYDAAAAKAHASDLVTLTKYDPSDLYAPGTSADDVKGTAAKAAIWQDADGFQAKGMAFFEAVAALEPAAGAGQKELAAAVGKVGGTCKSCHDDFRVKR.

The N-terminal stretch at 1 to 19 is a signal peptide; the sequence is MRRVLLATLMAALPAAAMA. Heme c contacts are provided by Arg-29, Thr-89, Ala-90, Cys-138, Cys-141, and His-142.

As to quaternary structure, monomer and homodimer. In terms of processing, binds 1 heme c group covalently per subunit.

Cytochrome c' is the most widely occurring bacterial c-type cytochrome. Cytochromes c' are high-spin proteins and the heme has no sixth ligand. Their exact function is not known. The chain is Cytochrome c' (cycP) from Cereibacter sphaeroides (strain ATCC 17023 / DSM 158 / JCM 6121 / CCUG 31486 / LMG 2827 / NBRC 12203 / NCIMB 8253 / ATH 2.4.1.) (Rhodobacter sphaeroides).